We begin with the raw amino-acid sequence, 316 residues long: Acetyl-coenzyme A carboxylase carboxyl transferase subunit beta (316 aa).

One can recognise a CoA carboxyltransferase N-terminal domain in the interval 29 to 298 (LWTKCPNCGV…LLSPLNSHHH (270 aa)). Positions 33, 36, 52, and 55 each coordinate Zn(2+). The C4-type zinc finger occupies 33-55 (CPNCGVLAYTKDLLANQLVCLDC).

This sequence belongs to the AccD/PCCB family. Acetyl-CoA carboxylase is a heterohexamer composed of biotin carboxyl carrier protein (AccB), biotin carboxylase (AccC) and two subunits each of ACCase subunit alpha (AccA) and ACCase subunit beta (AccD). The cofactor is Zn(2+).

The protein localises to the cytoplasm. The catalysed reaction is N(6)-carboxybiotinyl-L-lysyl-[protein] + acetyl-CoA = N(6)-biotinyl-L-lysyl-[protein] + malonyl-CoA. It participates in lipid metabolism; malonyl-CoA biosynthesis; malonyl-CoA from acetyl-CoA: step 1/1. In terms of biological role, component of the acetyl coenzyme A carboxylase (ACC) complex. Biotin carboxylase (BC) catalyzes the carboxylation of biotin on its carrier protein (BCCP) and then the CO(2) group is transferred by the transcarboxylase to acetyl-CoA to form malonyl-CoA. This chain is Acetyl-coenzyme A carboxylase carboxyl transferase subunit beta, found in Microcystis aeruginosa (strain NIES-843 / IAM M-2473).